Reading from the N-terminus, the 459-residue chain is uncharacterized protein (459 aa).

At K285 the chain carries N6-(pyridoxal phosphate)lysine.

This sequence belongs to the class-III pyridoxal-phosphate-dependent aminotransferase family.

Its subcellular location is the cytoplasm. This is an uncharacterized protein from Schizosaccharomyces pombe (strain 972 / ATCC 24843) (Fission yeast).